Reading from the N-terminus, the 458-residue chain is Sensor histidine kinase ZraS (458 aa).

Over 1-14 the chain is Cytoplasmic; that stretch reads MRFMQRSKDSLAKW. A helical membrane pass occupies residues 15 to 35; it reads LSAILPVVIVGLVGLFAVTVI. The Periplasmic portion of the chain corresponds to 36–194; it reads RDYGRETAAA…SAEDREQRNT (159 aa). The chain crosses the membrane as a helical span at residues 195 to 215; sequence LIILFALATVLLASVLSFFWY. At 216-458 the chain is on the cytoplasmic side; the sequence is RRYLRSRQLL…VNITRKDPQG (243 aa). The Histidine kinase domain maps to 244 to 451; sequence GVAHEIRNPL…RFTLWLPVNI (208 aa). His247 is modified (phosphohistidine; by autocatalysis).

In terms of processing, autophosphorylated.

It localises to the cell inner membrane. The catalysed reaction is ATP + protein L-histidine = ADP + protein N-phospho-L-histidine.. Activity of the ZraS/ZraR two-component system is repressed by the zinc-bound form of ZraP, which probably interacts with the periplasmic region of ZraS. Its function is as follows. Part of the Zra signaling pathway, an envelope stress response (ESR) system composed of the periplasmic accessory protein ZraP, the histidine kinase ZraS and the transcriptional regulator ZraR. The ZraPSR system contributes to antibiotic resistance and is important for membrane integrity in the presence of membrane-targeting biocides. ZraS is a member of the two-component regulatory system ZraS/ZraR. Functions as a membrane-associated sensor kinase that phosphorylates ZraR in response to high concentrations of Zn(2+) or Pb(2+) in the medium. This chain is Sensor histidine kinase ZraS (zraS), found in Escherichia coli O157:H7.